The chain runs to 90 residues: Bombyxin B-5 (90 aa).

Residues 1–20 (MMKTAVMFILVVVISLTYSS) form the signal peptide. Cystine bridges form between Cys30–Cys75, Cys42–Cys88, and Cys74–Cys79. Positions 49 to 64 (GGAQYAPYWQETYLRS) are cleaved as a propeptide — c peptide like.

This sequence belongs to the insulin family. As to quaternary structure, heterodimer of a B chain and an A chain linked by two disulfide bonds.

Its subcellular location is the secreted. In terms of biological role, brain peptide responsible for activation of prothoracic glands to produce ecdysone in insects. In Bombyx mori (Silk moth), this protein is Bombyxin B-5 (BBXB5).